We begin with the raw amino-acid sequence, 2498 residues long: Nuclear receptor corepressor 1 (2498 aa).

4 disordered regions span residues 1–38 (MSSS…QQEY), 54–84 (IQQQ…SGYD), 134–169 (SEVK…SKLS), and 198–223 (QQQL…VEQK). Composition is skewed to basic and acidic residues over residues 71 to 82 (PVSDRPQDRRSG), 134 to 148 (SEVK…KHES), and 204 to 213 (EAAKPPEPEK). The segment at 154 to 304 (SGQPGDDQDA…REQNICQRYD (151 aa)) is interaction with tbl1xr1-A. A coiled-coil region spans residues 168–208 (LSKEELIQSMDRVDREIAKVEQQILKLKKKQQQLEEEAAKP). One can recognise an SANT 1 domain in the interval 427–478 (QFMNVWTDHEKEIFKEKFVRHPKNFGLIASYLERKNVSDCVLYYYLTKKNEN). Basic residues predominate over residues 483–493 (VRRNYPKRRGR). 7 disordered regions span residues 483-649 (VRRN…GSKS), 668-912 (NLLQ…FGSR), 1075-1122 (SLSD…GTPG), 1417-1436 (DLVS…IMEG), 1470-1583 (SWGV…QRES), 1737-1851 (PGTQ…AQES), and 1916-1990 (PQME…TAHT). 2 stretches are compositionally biased toward basic and acidic residues: residues 502–525 (SQEE…KEDE) and 535–548 (KEEL…KIDA). Positions 502 to 552 (SQEEKEIEKVEEEKADRNDKKEDERREEEEKEEKEELREGAKDKIDAVAED) form a coiled coil. Residues 582-611 (ASEAAAANAVTTATTAPVTTTSTATTVAPV) show a composition bias toward low complexity. Residues 612 to 627 (PVAPPPEEPTPPPPPQ) show a composition bias toward pro residues. In terms of domain architecture, SANT 2 spans 628 to 665 (EQSLVDHGRNWGAIAKMVGSKSESQCKNFYFNYKRRHN). Over residues 689 to 699 (QCDSIASTVSA) the composition is skewed to polar residues. Acidic residues predominate over residues 700-719 (QEDDENEASNEEENPEDSEG). Composition is skewed to low complexity over residues 727–738 (ESAPSPSPAEAA) and 761–774 (DAAS…SPSP). A compositionally biased stretch (basic and acidic residues) spans 854-863 (MERLMDRAEA). 2 stretches are compositionally biased toward polar residues: residues 872–891 (QNIS…SATC) and 1102–1122 (ATSS…GTPG). The segment covering 1484-1501 (KMGERSKHEDTKSSDAIR) has biased composition (basic and acidic residues). Positions 1505–1516 (TSVVSSGPSVLR) are enriched in polar residues. Residues 1545-1558 (PSPMSRSSPMARSA) are compositionally biased toward low complexity. Residues 1765-1804 (VSAERERERERERERDREREKEQRERESDRERERDRLAHA) are a coiled coil. Over residues 1767–1802 (AERERERERERERDREREKEQRERESDRERERDRLA) the composition is skewed to basic and acidic residues. Composition is skewed to low complexity over residues 1803-1813 (HAAAAAAAASA) and 1820-1835 (RPVS…RPSS). Residues 1842 to 1851 (PSPSVRAQES) show a composition bias toward polar residues. Over residues 1921–1942 (AKPKESKNDSARSEENLSRRNA) the composition is skewed to basic and acidic residues. Positions 1958-1980 (SPYTSSSFSSSKSQSQPSSAVYS) are enriched in low complexity. Positions 2012–2016 (IDVII) match the CORNR box 1 motif. The interval 2022 to 2109 (SDKDGRERNS…SPPQQTIPGH (88 aa)) is disordered. Low complexity predominate over residues 2031 to 2040 (SQSSDASSSH). The span at 2043–2052 (HRYEAPRETI) shows a compositional bias: basic and acidic residues. A compositionally biased stretch (polar residues) spans 2093–2106 (RYRQQQESPPQQTI). The CORNR box 2 signature appears at 2123-2127 (ICHII). Positions 2136-2145 (PVNQPLQQPP) are enriched in low complexity. The disordered stretch occupies residues 2136–2222 (PVNQPLQQPP…PISPPQAPML (87 aa)). The segment covering 2146-2175 (ASTFQSTNPTSTAVRTKASSRFSPESQVQP) has biased composition (polar residues). Over residues 2190 to 2209 (IPDKPRGRPGKSPDRGHISE) the composition is skewed to basic and acidic residues. The short motif at 2326 to 2330 (LEDII) is the CORNR box 3 element. 2 disordered regions span residues 2344 to 2446 (DHGV…YNPL) and 2464 to 2498 (TSMT…DSDE). Polar residues predominate over residues 2353–2362 (QGNQSGTPNS). Basic residues predominate over residues 2380-2394 (HKQKLISKYGSRKTK). Composition is skewed to polar residues over residues 2464-2476 (TSMT…QQSR) and 2489-2498 (QYETLSDSDE).

The protein belongs to the N-CoR nuclear receptor corepressors family. Forms a large corepressor complex that contains sin3a/b, histone deacetylases hdac1 and hdac2, rbbp4 and possibly rbbp7. Interacts with the thyroid receptor (TR, composed of rxra and thrb) and the retinoid acid receptor (RAR, composed of rxra and rara) in the absence of ligand. Interacts with tbl1xr1-A and possibly tbl1xr1-B. Interacts with zbtb33/kaiso.

The protein resides in the nucleus. In terms of biological role, mediates transcriptional repression by certain nuclear receptors. Participates in complexes which promote histone deacetylation and the formation of repressive chromatin structures which may impede access by the basal transcription machinery. In association with hdac3, may play a role in the regulation of the circadian clock. The polypeptide is Nuclear receptor corepressor 1 (ncor1) (Xenopus laevis (African clawed frog)).